The chain runs to 356 residues: GTPase Obg (356 aa).

Residues 1–158 (MFIDSVKITL…RLVRLELKLI (158 aa)) enclose the Obg domain. The OBG-type G domain occupies 159 to 339 (ADVGLVGFPN…LKFMLLEEIK (181 aa)). GTP-binding positions include 165–172 (GFPNVGKS), 190–194 (FTTLT), 212–215 (DIPG), 280–283 (SKSD), and 320–322 (SSL). Serine 172 and threonine 192 together coordinate Mg(2+).

Belongs to the TRAFAC class OBG-HflX-like GTPase superfamily. OBG GTPase family. Monomer. Mg(2+) is required as a cofactor.

It is found in the cytoplasm. An essential GTPase which binds GTP, GDP and possibly (p)ppGpp with moderate affinity, with high nucleotide exchange rates and a fairly low GTP hydrolysis rate. Plays a role in control of the cell cycle, stress response, ribosome biogenesis and in those bacteria that undergo differentiation, in morphogenesis control. The protein is GTPase Obg of Campylobacter jejuni subsp. jejuni serotype O:23/36 (strain 81-176).